We begin with the raw amino-acid sequence, 1052 residues long: Eukaryotic translation initiation factor 3 subunit A (1052 aa).

One can recognise a PCI domain in the interval 325–505 (IQYAASAVLL…GSLHFNNNIF (181 aa)). 2 coiled-coil regions span residues 568-712 (REHV…RLRE) and 769-882 (EKTA…SAQT). 2 stretches are compositionally biased toward basic and acidic residues: residues 570–600 (HVSNLSRRDEIEKQKEELEQSRRRRHQEQMQ) and 793–874 (KIRL…EQEK). Disordered stretches follow at residues 570–606 (HVSNLSRRDEIEKQKEELEQSRRRRHQEQMQKHHQNQ) and 793–1052 (KIRL…DDKN). Composition is skewed to polar residues over residues 875–887 (LSNLSAQTSQPTW) and 895–906 (APTTAAPSSMRV). Composition is skewed to basic and acidic residues over residues 942 to 952 (DRGDRAPRDTG), 960 to 970 (DRGDRAPRDTG), 979 to 1013 (RAPRDFSGRSEPSRSGPRDFSGRSEAGRTSGERRA), and 1037 to 1052 (GSERRVNIPSRGDDKN).

This sequence belongs to the eIF-3 subunit A family. As to quaternary structure, component of the eukaryotic translation initiation factor 3 (eIF-3) complex.

The protein resides in the cytoplasm. RNA-binding component of the eukaryotic translation initiation factor 3 (eIF-3) complex, which is involved in protein synthesis of a specialized repertoire of mRNAs and, together with other initiation factors, stimulates binding of mRNA and methionyl-tRNAi to the 40S ribosome. The eIF-3 complex specifically targets and initiates translation of a subset of mRNAs involved in cell proliferation. The chain is Eukaryotic translation initiation factor 3 subunit A from Monosiga brevicollis (Choanoflagellate).